The sequence spans 207 residues: Small ribosomal subunit protein uS4 (207 aa).

The tract at residues Asp30–Asn54 is disordered. A compositionally biased stretch (polar residues) spans Gly42–Gly53. In terms of domain architecture, S4 RNA-binding spans Ser97–Leu160.

This sequence belongs to the universal ribosomal protein uS4 family. As to quaternary structure, part of the 30S ribosomal subunit. Contacts protein S5. The interaction surface between S4 and S5 is involved in control of translational fidelity.

Functionally, one of the primary rRNA binding proteins, it binds directly to 16S rRNA where it nucleates assembly of the body of the 30S subunit. In terms of biological role, with S5 and S12 plays an important role in translational accuracy. This Cupriavidus taiwanensis (strain DSM 17343 / BCRC 17206 / CCUG 44338 / CIP 107171 / LMG 19424 / R1) (Ralstonia taiwanensis (strain LMG 19424)) protein is Small ribosomal subunit protein uS4.